The primary structure comprises 476 residues: Bifunctional protein GlmU (476 aa).

Residues 1 to 232 (MGDLAAIILA…PVEVMGVNDR (232 aa)) form a pyrophosphorylase region. UDP-N-acetyl-alpha-D-glucosamine is bound by residues 9 to 12 (LAAG), K23, Q75, and 80 to 81 (GT). A Mg(2+)-binding site is contributed by D105. 4 residues coordinate UDP-N-acetyl-alpha-D-glucosamine: G142, E157, N172, and N230. N230 serves as a coordination point for Mg(2+). Positions 233-253 (AQLAEAGRFARQRINRELMLD) are linker. Residues 254–476 (GVTIVDPAAT…DGWKLKQRDQ (223 aa)) are N-acetyltransferase. R353 and K371 together coordinate UDP-N-acetyl-alpha-D-glucosamine. The active-site Proton acceptor is the H383. UDP-N-acetyl-alpha-D-glucosamine-binding residues include Y386 and N397. Acetyl-CoA contacts are provided by residues 406–407 (NY), S425, A443, and R460.

This sequence in the N-terminal section; belongs to the N-acetylglucosamine-1-phosphate uridyltransferase family. The protein in the C-terminal section; belongs to the transferase hexapeptide repeat family. Homotrimer. The cofactor is Mg(2+).

The protein resides in the cytoplasm. It catalyses the reaction alpha-D-glucosamine 1-phosphate + acetyl-CoA = N-acetyl-alpha-D-glucosamine 1-phosphate + CoA + H(+). The catalysed reaction is N-acetyl-alpha-D-glucosamine 1-phosphate + UTP + H(+) = UDP-N-acetyl-alpha-D-glucosamine + diphosphate. It participates in nucleotide-sugar biosynthesis; UDP-N-acetyl-alpha-D-glucosamine biosynthesis; N-acetyl-alpha-D-glucosamine 1-phosphate from alpha-D-glucosamine 6-phosphate (route II): step 2/2. Its pathway is nucleotide-sugar biosynthesis; UDP-N-acetyl-alpha-D-glucosamine biosynthesis; UDP-N-acetyl-alpha-D-glucosamine from N-acetyl-alpha-D-glucosamine 1-phosphate: step 1/1. The protein operates within bacterial outer membrane biogenesis; LPS lipid A biosynthesis. In terms of biological role, catalyzes the last two sequential reactions in the de novo biosynthetic pathway for UDP-N-acetylglucosamine (UDP-GlcNAc). The C-terminal domain catalyzes the transfer of acetyl group from acetyl coenzyme A to glucosamine-1-phosphate (GlcN-1-P) to produce N-acetylglucosamine-1-phosphate (GlcNAc-1-P), which is converted into UDP-GlcNAc by the transfer of uridine 5-monophosphate (from uridine 5-triphosphate), a reaction catalyzed by the N-terminal domain. In Geobacter metallireducens (strain ATCC 53774 / DSM 7210 / GS-15), this protein is Bifunctional protein GlmU.